Consider the following 1235-residue polypeptide: JNK-interacting protein 3 (1235 aa).

A disordered region spans residues 1–22 (MMDNDDALLNNGGPQSGAETVY). An RH1 domain is found at 25–113 (EDNNMVMSEK…VTQYEREKSA (89 aa)). A coiled-coil region spans residues 84-184 (RINQEQDVEL…NKLHERYTEL (101 aa)). The tract at residues 278-325 (GAATDSLQQQHQATSPQSPPDTSPVVPNVPPANVGRSTTKKEQRSDNN) is disordered. Residues 282–293 (DSLQQQHQATSP) are compositionally biased toward polar residues. Positions 294 to 307 (QSPPDTSPVVPNVP) are enriched in pro residues. Residues 366 to 493 (GKEVENLIME…AVRLTEILRA (128 aa)) are a coiled coil. The RH2 domain maps to 456–526 (RKRFTRVEMA…TPSNRPTERI (71 aa)). Disordered stretches follow at residues 520-572 (NRPT…MHPA), 813-852 (KPKS…PVNA), and 869-897 (PGAP…STGS). Residues 529–543 (GLGGGPMFRNTGGGS) show a composition bias toward gly residues. Low complexity-rich tracts occupy residues 544–555 (PAHSHGSPSRGS) and 821–830 (NSNSKPQQQQ). Residues 874–897 (RLSSGNSGSDGNQANNNNSSSTGS) are compositionally biased toward polar residues.

The protein belongs to the JIP scaffold family. As to quaternary structure, forms homo- and heterooligomeric complexes. Binds the TPR motif-containing C-terminal of kinesin light chain, Klc. Pre-assembled syd scaffolding complexes are then transported as a cargo of kinesin, to the required subcellular location.

It localises to the cytoplasm. Functionally, the JNK-interacting protein (JIP) group of scaffold proteins selectively mediates JNK-signaling by aggregating specific components of the MAPK cascade to form a functional JNK signaling module. May function as a regulator of vesicle transport, through interactions with the JNK-signaling components and motor proteins. Syd is required for efficient kinesin-I mediated axonal transport. The sequence is that of JNK-interacting protein 3 from Drosophila pseudoobscura pseudoobscura (Fruit fly).